The following is a 122-amino-acid chain: Large ribosomal subunit protein uL14c (122 aa).

This sequence belongs to the universal ribosomal protein uL14 family. Part of the 50S ribosomal subunit.

It is found in the plastid. Its subcellular location is the chloroplast. Functionally, binds to 23S rRNA. This chain is Large ribosomal subunit protein uL14c, found in Porphyra purpurea (Red seaweed).